The chain runs to 359 residues: Nicotinate-nucleotide--dimethylbenzimidazole phosphoribosyltransferase (359 aa).

E318 acts as the Proton acceptor in catalysis.

This sequence belongs to the CobT family. In terms of assembly, homodimer.

It carries out the reaction 5,6-dimethylbenzimidazole + nicotinate beta-D-ribonucleotide = alpha-ribazole 5'-phosphate + nicotinate + H(+). It functions in the pathway nucleoside biosynthesis; alpha-ribazole biosynthesis; alpha-ribazole from 5,6-dimethylbenzimidazole: step 1/2. Functionally, catalyzes the synthesis of alpha-ribazole-5'-phosphate from nicotinate mononucleotide (NAMN) and 5,6-dimethylbenzimidazole (DMB). The chain is Nicotinate-nucleotide--dimethylbenzimidazole phosphoribosyltransferase from Escherichia coli O9:H4 (strain HS).